The chain runs to 1249 residues: Protein STU1 (1249 aa).

Composition is skewed to low complexity over residues 138 to 156 (LNSSGSLKAGSLSSSTATK) and 555 to 574 (AASPMPSYASSSSTGAPSSA). Disordered stretches follow at residues 138 to 161 (LNSSGSLKAGSLSSSTATKSKPHE), 545 to 619 (KQLE…NPVF), 644 to 718 (HVET…LGLG), 755 to 846 (AEHE…NGNI), 860 to 891 (AFQTPLNPKTSALRSSSAIRTPAWKDSPRPEA), and 1084 to 1118 (HPAPPSSSADNSDPMTSALSQLSLSSSKESPEKRT). The span at 581–600 (KKMDLKAMLAERRRAVKEAG) shows a compositional bias: basic and acidic residues. 2 stretches are compositionally biased toward low complexity: residues 647-667 (TSSPSPVRSPTPSSSATRIRP) and 708-718 (SPSLSPSLGLG). The span at 755 to 774 (AEHEVDELTLKEGQKTRDDG) shows a compositional bias: basic and acidic residues. 3 stretches are compositionally biased toward polar residues: residues 809–822 (QQGNTFSTSTSGRV), 831–844 (ATGTTASLPNSRNG), and 863–878 (TPLNPKTSALRSSSAI). Residues 1089–1111 (SSSADNSDPMTSALSQLSLSSSK) are compositionally biased toward low complexity.

This sequence belongs to the CLASP family. As to quaternary structure, interacts with microtubules.

It is found in the cytoplasm. It localises to the cytoskeleton. The protein localises to the nucleus. Its subcellular location is the spindle. Functionally, microtubule binding protein that promotes the stabilization of dynamic microtubules. Required for mitotic spindle formation. The sequence is that of Protein STU1 (STU1) from Cryptococcus neoformans var. neoformans serotype D (strain JEC21 / ATCC MYA-565) (Filobasidiella neoformans).